Here is an 85-residue protein sequence, read N- to C-terminus: Teretoxin Tan9.6 (85 aa).

The N-terminal stretch at 1 to 21 is a signal peptide; sequence MMSKTGALLLTFMILVLFSMA. A propeptide spanning residues 22–52 is cleaved from the precursor; the sequence is AADALGERFEDHEQKIREQDAGVGLLSLMGR.

Post-translationally, contains 3 disulfide bonds. Expressed by the venom duct.

It is found in the secreted. This chain is Teretoxin Tan9.6, found in Terebra anilis (Auger snail).